The chain runs to 423 residues: UPF0229 protein PLES_05841 (423 aa).

Residues 84-107 form a disordered region; sequence AGEHIARPSGGGGGRGGGKASNSG. Positions 92–102 are enriched in gly residues; sequence SGGGGGRGGGK.

This sequence belongs to the UPF0229 family.

The sequence is that of UPF0229 protein PLES_05841 from Pseudomonas aeruginosa (strain LESB58).